The chain runs to 374 residues: Pectinesterase (374 aa).

A signal peptide spans 1-31 (MVKLLNSTRELSINALSMLNSFGDMVAQATG). N58 and N124 each carry an N-linked (GlcNAc...) asparagine glycan. 2 residues coordinate substrate: T133 and Q163. Catalysis depends on D186, which acts as the Proton donor. A disulfide bridge links C200 with C220. The active-site Nucleophile is the D207. An N-linked (GlcNAc...) asparagine glycan is attached at N230. Positions 275 and 277 each coordinate substrate. N303 is a glycosylation site (N-linked (GlcNAc...) asparagine).

Belongs to the pectinesterase family. Pollen, and at much lower levels in pistils and petals.

It localises to the secreted. The protein localises to the cell wall. The enzyme catalyses [(1-&gt;4)-alpha-D-galacturonosyl methyl ester](n) + n H2O = [(1-&gt;4)-alpha-D-galacturonosyl](n) + n methanol + n H(+). It participates in glycan metabolism; pectin degradation; 2-dehydro-3-deoxy-D-gluconate from pectin: step 1/5. Its function is as follows. May play a role in pollen germination and/or tube growth. The polypeptide is Pectinesterase (PPE1) (Petunia integrifolia (Violet-flowered petunia)).